The following is a 691-amino-acid chain: DNA-directed RNA polymerase subunit beta' (691 aa).

Positions 69, 71, 87, and 90 each coordinate Zn(2+). Residues Asp489, Asp491, and Asp493 each contribute to the Mg(2+) site.

It belongs to the RNA polymerase beta' chain family. RpoC1 subfamily. As to quaternary structure, in plastids the minimal PEP RNA polymerase catalytic core is composed of four subunits: alpha, beta, beta', and beta''. When a (nuclear-encoded) sigma factor is associated with the core the holoenzyme is formed, which can initiate transcription. Requires Mg(2+) as cofactor. The cofactor is Zn(2+).

It localises to the plastid. Its subcellular location is the chloroplast. The enzyme catalyses RNA(n) + a ribonucleoside 5'-triphosphate = RNA(n+1) + diphosphate. Functionally, DNA-dependent RNA polymerase catalyzes the transcription of DNA into RNA using the four ribonucleoside triphosphates as substrates. This chain is DNA-directed RNA polymerase subunit beta', found in Jasminum nudiflorum (Winter jasmine).